Consider the following 591-residue polypeptide: Aspartate--tRNA ligase (591 aa).

Residue Glu171 participates in L-aspartate binding. An aspartate region spans residues 195–198; the sequence is QLFK. Arg217 contributes to the L-aspartate binding site. Residues 217 to 219 and Gln226 contribute to the ATP site; that span reads RDE. His448 lines the L-aspartate pocket. Residue Glu482 coordinates ATP. Position 489 (Arg489) interacts with L-aspartate. ATP is bound at residue 534-537; that stretch reads GLDR.

It belongs to the class-II aminoacyl-tRNA synthetase family. Type 1 subfamily. As to quaternary structure, homodimer.

It localises to the cytoplasm. The catalysed reaction is tRNA(Asp) + L-aspartate + ATP = L-aspartyl-tRNA(Asp) + AMP + diphosphate. Functionally, catalyzes the attachment of L-aspartate to tRNA(Asp) in a two-step reaction: L-aspartate is first activated by ATP to form Asp-AMP and then transferred to the acceptor end of tRNA(Asp). This is Aspartate--tRNA ligase from Edwardsiella ictaluri (strain 93-146).